Consider the following 130-residue polypeptide: Small ribosomal subunit protein uS9 (130 aa).

It belongs to the universal ribosomal protein uS9 family.

This is Small ribosomal subunit protein uS9 from Buchnera aphidicola subsp. Acyrthosiphon pisum (strain Tuc7).